The primary structure comprises 1162 residues: ATP-dependent helicase/deoxyribonuclease subunit B (1162 aa).

In terms of domain architecture, UvrD-like helicase ATP-binding spans 1 to 275 (MELNAYIGRA…QFFKQQYRFN (275 aa)). 8–15 (GRAGTGKS) is a binding site for ATP. Residues 269-583 (KQQYRFNNKD…SIGTMDLAKV (315 aa)) form the UvrD-like helicase C-terminal domain. Residues C784, C1117, C1120, and C1126 each contribute to the [4Fe-4S] cluster site.

The protein belongs to the helicase family. AddB/RexB type 1 subfamily. Heterodimer of AddA and AddB. The cofactor is Mg(2+). [4Fe-4S] cluster is required as a cofactor.

Its function is as follows. The heterodimer acts as both an ATP-dependent DNA helicase and an ATP-dependent, dual-direction single-stranded exonuclease. Recognizes the chi site generating a DNA molecule suitable for the initiation of homologous recombination. The AddB subunit has 5' -&gt; 3' nuclease activity but not helicase activity. In Staphylococcus haemolyticus (strain JCSC1435), this protein is ATP-dependent helicase/deoxyribonuclease subunit B.